We begin with the raw amino-acid sequence, 188 residues long: dCTP deaminase (188 aa).

DCTP contacts are provided by residues lysine 111–arginine 116, threonine 135–glutamate 137, glutamine 156, tyrosine 170, and glutamine 180. The Proton donor/acceptor role is filled by glutamate 137.

Belongs to the dCTP deaminase family. Homotrimer.

It carries out the reaction dCTP + H2O + H(+) = dUTP + NH4(+). It participates in pyrimidine metabolism; dUMP biosynthesis; dUMP from dCTP (dUTP route): step 1/2. Its function is as follows. Catalyzes the deamination of dCTP to dUTP. The protein is dCTP deaminase of Dichelobacter nodosus (strain VCS1703A).